A 179-amino-acid polypeptide reads, in one-letter code: uncharacterized protein (179 aa).

A disordered region spans residues 27 to 54; the sequence is TAKKSRVQAREARAAVEENKKAQLERDK.

This is an uncharacterized protein from Escherichia coli (strain K12).